A 287-amino-acid polypeptide reads, in one-letter code: Probable endonuclease 4 (287 aa).

Residues His-69, His-109, Glu-146, Asp-180, His-183, His-217, Asp-230, His-232, and Glu-262 each contribute to the Zn(2+) site.

The protein belongs to the AP endonuclease 2 family. Zn(2+) is required as a cofactor.

The catalysed reaction is Endonucleolytic cleavage to 5'-phosphooligonucleotide end-products.. Functionally, endonuclease IV plays a role in DNA repair. It cleaves phosphodiester bonds at apurinic or apyrimidinic (AP) sites, generating a 3'-hydroxyl group and a 5'-terminal sugar phosphate. In Petrotoga mobilis (strain DSM 10674 / SJ95), this protein is Probable endonuclease 4.